We begin with the raw amino-acid sequence, 273 residues long: MKDLSIRIAVVGAGGRMGRQLIQAIEQMDGVVLGAALERSGSSLLGSDAGELAGLGKNGITVNESLDAVQNDFDILIDFTRPEGTLAHLAFCRLHRKGMIIGTTGFDDAGKAAIKQAAQDIGIVFAANFSVGVNVMLKLLEKAAKVMGDYTDIEIIEAHHRHKVDAPSGTALAMGEVIADALGRDLKSCAVYTREGHTGERDPKSIGFATVRAGDIVGEHTAMFADIGERVEITHKASSRMTFANGAVRAAIWISSKESGIFDMRDVLSLDDL.

NAD(+) contacts are provided by residues 12-17 and Glu-38; that span reads GAGGRM. An NADP(+)-binding site is contributed by Arg-39. NAD(+)-binding positions include 102 to 104 and 126 to 129; these read GTT and AANF. Residue His-159 is the Proton donor/acceptor of the active site. His-160 is a (S)-2,3,4,5-tetrahydrodipicolinate binding site. The active-site Proton donor is Lys-163. 169–170 provides a ligand contact to (S)-2,3,4,5-tetrahydrodipicolinate; that stretch reads GT.

Belongs to the DapB family. In terms of assembly, homotetramer.

The protein localises to the cytoplasm. The catalysed reaction is (S)-2,3,4,5-tetrahydrodipicolinate + NAD(+) + H2O = (2S,4S)-4-hydroxy-2,3,4,5-tetrahydrodipicolinate + NADH + H(+). The enzyme catalyses (S)-2,3,4,5-tetrahydrodipicolinate + NADP(+) + H2O = (2S,4S)-4-hydroxy-2,3,4,5-tetrahydrodipicolinate + NADPH + H(+). The protein operates within amino-acid biosynthesis; L-lysine biosynthesis via DAP pathway; (S)-tetrahydrodipicolinate from L-aspartate: step 4/4. Functionally, catalyzes the conversion of 4-hydroxy-tetrahydrodipicolinate (HTPA) to tetrahydrodipicolinate. This Pectobacterium atrosepticum (strain SCRI 1043 / ATCC BAA-672) (Erwinia carotovora subsp. atroseptica) protein is 4-hydroxy-tetrahydrodipicolinate reductase.